The sequence spans 479 residues: U3 snoRNP-associated protein-like EMB2271 (479 aa).

Positions 1–73 (MKLEKKKGIG…AHETVGEKRK (73 aa)) are disordered. Over residues 8 to 17 (GIGAKRRGKK) the composition is skewed to basic residues. Residues 18 to 38 (SSIDHDPFLEEETEKRRKFNY) are compositionally biased toward basic and acidic residues. The span at 39 to 51 (DDDDDIESVESEE) shows a compositional bias: acidic residues. A compositionally biased stretch (basic and acidic residues) spans 52–73 (EGKVGEEVEDEFAHETVGEKRK). 7 WD repeats span residues 143 to 182 (KHQH…SDEY), 204 to 243 (RHNK…HVQA), 246 to 285 (GHCG…YIES), 288 to 326 (GHQS…RLIY), 328 to 366 (ASES…PVFI), 386 to 425 (PACS…SAIQ), and 431 to 471 (PLPG…QNGV).

It belongs to the WD repeat RRP9 family.

The protein localises to the nucleus. The protein resides in the nucleolus. In terms of biological role, component of a nucleolar small nuclear ribonucleoprotein particle (snoRNP) thought to participate in the processing and modification of pre-ribosomal RNA. Essential for embryogenesis. May function during late embryogenesis. This Arabidopsis thaliana (Mouse-ear cress) protein is U3 snoRNP-associated protein-like EMB2271.